Reading from the N-terminus, the 186-residue chain is Dynactin subunit 3 (186 aa).

A2 is modified (N-acetylalanine). A coiled-coil region spans residues 135–157 (QQQDQCVEITEESKALLEEYNKT).

Belongs to the dynactin subunit 3 family. In terms of assembly, subunit of dynactin, a multiprotein complex part of a tripartite complex with dynein and a adapter, such as BICDL1, BICD2 or HOOK3. The dynactin complex is built around ACTR1A/ACTB filament and consists of an actin-related filament composed of a shoulder domain, a pointed end and a barbed end. Its length is defined by its flexible shoulder domain. The soulder is composed of 2 DCTN1 subunits, 4 DCTN2 and 2 DCTN3. The 4 DCNT2 (via N-terminus) bind the ACTR1A filament and act as molecular rulers to determine the length. The pointed end is important for binding dynein-dynactin cargo adapters. Consists of 4 subunits: ACTR10, DCNT4, DCTN5 and DCTN6. The barbed end is composed of a CAPZA1:CAPZB heterodimers, which binds ACTR1A/ACTB filament and dynactin and stabilizes dynactin.

Its subcellular location is the cytoplasm. It is found in the cytoskeleton. The protein localises to the microtubule organizing center. It localises to the centrosome. The protein resides in the chromosome. Its subcellular location is the centromere. It is found in the kinetochore. The protein localises to the spindle. It localises to the cleavage furrow. The protein resides in the midbody. Part of the dynactin complex that activates the molecular motor dynein for ultra-processive transport along microtubules. Together with dynein may be involved in spindle assembly and cytokinesis. The polypeptide is Dynactin subunit 3 (DCTN3) (Bos taurus (Bovine)).